Consider the following 205-residue polypeptide: Small ribosomal subunit protein uS4 (205 aa).

The 64-residue stretch at 94–157 (SRLDTVVYRM…KQIALIQESI (64 aa)) folds into the S4 RNA-binding domain.

This sequence belongs to the universal ribosomal protein uS4 family. As to quaternary structure, part of the 30S ribosomal subunit. Contacts protein S5. The interaction surface between S4 and S5 is involved in control of translational fidelity.

In terms of biological role, one of the primary rRNA binding proteins, it binds directly to 16S rRNA where it nucleates assembly of the body of the 30S subunit. With S5 and S12 plays an important role in translational accuracy. The protein is Small ribosomal subunit protein uS4 of Rickettsia canadensis (strain McKiel).